The sequence spans 96 residues: uncharacterized protein (96 aa).

3 helical membrane-spanning segments follow: residues 14–34 (FIEG…KYWA), 38–58 (LAVT…LLVL), and 67–87 (WPLK…GNFL).

The protein resides in the cell membrane. This is an uncharacterized protein from Bacillus subtilis (strain 168).